The chain runs to 440 residues: Glutamyl-tRNA reductase (440 aa).

Substrate contacts are provided by residues 50 to 53 (TCNR), Ser109, 114 to 116 (EPQ), and Gln120. Cys51 serves as the catalytic Nucleophile. An NADP(+)-binding site is contributed by 189–194 (GAGEMA).

It belongs to the glutamyl-tRNA reductase family. As to quaternary structure, homodimer.

It carries out the reaction (S)-4-amino-5-oxopentanoate + tRNA(Glu) + NADP(+) = L-glutamyl-tRNA(Glu) + NADPH + H(+). Its pathway is porphyrin-containing compound metabolism; protoporphyrin-IX biosynthesis; 5-aminolevulinate from L-glutamyl-tRNA(Glu): step 1/2. Its function is as follows. Catalyzes the NADPH-dependent reduction of glutamyl-tRNA(Glu) to glutamate 1-semialdehyde (GSA). The sequence is that of Glutamyl-tRNA reductase from Nitratidesulfovibrio vulgaris (strain ATCC 29579 / DSM 644 / CCUG 34227 / NCIMB 8303 / VKM B-1760 / Hildenborough) (Desulfovibrio vulgaris).